The primary structure comprises 236 residues: Small ribosomal subunit protein uS2c (236 aa).

It belongs to the universal ribosomal protein uS2 family.

Its subcellular location is the plastid. The sequence is that of Small ribosomal subunit protein uS2c (rps2) from Cuscuta exaltata (Tall dodder).